The sequence spans 209 residues: Uracil phosphoribosyltransferase (209 aa).

5-phospho-alpha-D-ribose 1-diphosphate is bound by residues Arg79, Arg104, and 131-139 (DPMLATGGS). Uracil contacts are provided by residues Ile194 and 199-201 (GDA). Residue Asp200 participates in 5-phospho-alpha-D-ribose 1-diphosphate binding.

Belongs to the UPRTase family. The cofactor is Mg(2+).

It carries out the reaction UMP + diphosphate = 5-phospho-alpha-D-ribose 1-diphosphate + uracil. Its pathway is pyrimidine metabolism; UMP biosynthesis via salvage pathway; UMP from uracil: step 1/1. With respect to regulation, allosterically activated by GTP. Catalyzes the conversion of uracil and 5-phospho-alpha-D-ribose 1-diphosphate (PRPP) to UMP and diphosphate. The chain is Uracil phosphoribosyltransferase from Clostridium novyi (strain NT).